The sequence spans 520 residues: Glycosyl hydrolase family 109 protein 5 (520 aa).

An N-terminal signal peptide occupies residues M1–A27. NAD(+) contacts are provided by residues M77–R78, D99, W147–H150, E167–V168, and N196. Residues Y225, R248, Y260–H263, and Y338 each bind substrate. Residue Y260 coordinates NAD(+).

The protein belongs to the Gfo/Idh/MocA family. Glycosyl hydrolase 109 subfamily. Requires NAD(+) as cofactor.

Functionally, glycosidase. This Phocaeicola vulgatus (strain ATCC 8482 / DSM 1447 / JCM 5826 / CCUG 4940 / NBRC 14291 / NCTC 11154) (Bacteroides vulgatus) protein is Glycosyl hydrolase family 109 protein 5.